A 599-amino-acid chain; its full sequence is Putative sensor histidine kinase NtrY-like (599 aa).

4 helical membrane-spanning segments follow: residues 17-37 (ILILALAIASIISVCTTFYVI), 44-64 (FSTIIGFLLIDLAIFLILGIL), 85-105 (IVIAFSLVAAIPTIIVSVFSV), and 285-305 (IMFIFIALLLLFVAINFGVLF). The 55-residue stretch at 307–361 (AKIVKPIKKLVTATDKVKDGDLTVQVPENEVDKDEIGTLYAAFNRMIKQLSRQQR) folds into the HAMP domain. In terms of domain architecture, Histidine kinase spans 378-589 (KVAHEIKNPL…IIDIKFDLKE (212 aa)). Residue His-381 is modified to Phosphohistidine; by autocatalysis.

The protein localises to the cell membrane. The enzyme catalyses ATP + protein L-histidine = ADP + protein N-phospho-L-histidine.. Functionally, member of the two-component regulatory system RP614/RP562. The chain is Putative sensor histidine kinase NtrY-like from Rickettsia prowazekii (strain Madrid E).